The primary structure comprises 570 residues: Sulfite reductase [NADPH] hemoprotein beta-component (570 aa).

Residues Cys-434, Cys-440, Cys-479, and Cys-483 each coordinate [4Fe-4S] cluster. Cys-483 is a binding site for siroheme.

Belongs to the nitrite and sulfite reductase 4Fe-4S domain family. In terms of assembly, alpha(8)-beta(8). The alpha component is a flavoprotein, the beta component is a hemoprotein. Siroheme is required as a cofactor. It depends on [4Fe-4S] cluster as a cofactor.

It carries out the reaction hydrogen sulfide + 3 NADP(+) + 3 H2O = sulfite + 3 NADPH + 4 H(+). The protein operates within sulfur metabolism; hydrogen sulfide biosynthesis; hydrogen sulfide from sulfite (NADPH route): step 1/1. Its function is as follows. Component of the sulfite reductase complex that catalyzes the 6-electron reduction of sulfite to sulfide. This is one of several activities required for the biosynthesis of L-cysteine from sulfate. This chain is Sulfite reductase [NADPH] hemoprotein beta-component, found in Salmonella arizonae (strain ATCC BAA-731 / CDC346-86 / RSK2980).